A 222-amino-acid polypeptide reads, in one-letter code: MKDSMFLYEFDLCRYSKDLTALSLGLLIGASLTVRWVSLSMSSSRDLLHYLVLPLILVVILHEGLHALTAKLSGAKTSLGVLTKYGIILAVYVGINTPLPVKKIRYITIAPIIISIVAFFFSWVTYSPFWAILYIFNTTGIVGDLIVFLVLSKMPSDAIVVDEGTIMKSNAEFPEPYPSWFSKLIIGLAVLVFLYILTNIRIEFEVVGTLPNQTMPVNSHFE.

This is an uncharacterized protein from Pyrococcus woesei.